Here is a 371-residue protein sequence, read N- to C-terminus: Macrolide export protein MacA (371 aa).

At 1–10 the chain is on the cytoplasmic side; sequence MMQLSRGQRR. Residues 11–31 form a helical membrane-spanning segment; the sequence is WLAAIAVLLIGGFFIARHLMA. Over 32-371 the chain is Periplasmic; that stretch reads PVPVNYQTVK…IVSRGGTGDA (340 aa). Positions 94-127 form a coiled coil; the sequence is DPQQAQNQIKEVEATLQDLNAQRIQAKAELHLAT.

This sequence belongs to the membrane fusion protein (MFP) (TC 8.A.1) family. In terms of assembly, homohexamer. Part of the tripartite efflux system MacAB-TolC, which is composed of an inner membrane transporter, MacB, a periplasmic membrane fusion protein, MacA, and an outer membrane component, TolC. The complex forms a large protein conduit and can translocate molecules across both the inner and outer membranes. MacA interacts with MacB and TolC.

It is found in the cell inner membrane. Functionally, part of the tripartite efflux system MacAB-TolC. MacA stimulates the ATPase activity of MacB by promoting the closed ATP-bound state of MacB, increases the capacity of MacB to bind macrolides such as erythromycin, and provides a physical link between MacB and TolC. Confers resistance against macrolides. The protein is Macrolide export protein MacA (macA) of Yersinia pestis.